A 342-amino-acid polypeptide reads, in one-letter code: UDP-N-acetylenolpyruvoylglucosamine reductase (342 aa).

The region spanning Ile13 to Glu183 is the FAD-binding PCMH-type domain. Arg159 is an active-site residue. Tyr190 contributes to the substrate binding site. Residue Ser229 is the Proton donor of the active site. Glu325 is a catalytic residue.

The protein belongs to the MurB family. Monomer. It depends on FAD as a cofactor.

The protein resides in the cytoplasm. It carries out the reaction UDP-N-acetyl-alpha-D-muramate + NADP(+) = UDP-N-acetyl-3-O-(1-carboxyvinyl)-alpha-D-glucosamine + NADPH + H(+). The protein operates within cell wall biogenesis; peptidoglycan biosynthesis. Its function is as follows. Cell wall formation. The polypeptide is UDP-N-acetylenolpyruvoylglucosamine reductase (murB) (Escherichia coli (strain K12)).